The following is a 290-amino-acid chain: Xyloglucan endotransglycosylase/hydrolase protein 8 (290 aa).

Positions 1 to 25 are cleaved as a signal peptide; that stretch reads MAKHLALSVAAAVAVSWLAASSAAA. The GH16 domain occupies 26 to 218; it reads AGFYEKFDVV…WSGAPFVVSY (193 aa). The active-site Nucleophile is the glutamate 106. Glutamate 110 acts as the Proton donor in catalysis. Glutamate 110 serves as a coordination point for xyloglucan. An N-linked (GlcNAc...) asparagine glycan is attached at asparagine 114. Residues 123-125, 133-135, and 197-198 contribute to the xyloglucan site; these read NTN, KKE, and YW. Intrachain disulfides connect cysteine 226–cysteine 240 and cysteine 273–cysteine 287. Xyloglucan is bound at residue arginine 278.

Belongs to the glycosyl hydrolase 16 family. XTH group 2 subfamily. Contains at least one intrachain disulfide bond essential for its enzymatic activity. As to expression, transcript strongly detected in leaf sheaths. Weakly or not expressed in leaf blades, roots and calli. Accumulation of transcript detected in shoot apex meristem, vascular tissues, young leaves, vascular bundles of leaf sheaths, and peripheral cylinder of the vascular bundles and fibers in the nodal region.

It localises to the secreted. Its subcellular location is the cell wall. The protein resides in the extracellular space. It is found in the apoplast. The enzyme catalyses breaks a beta-(1-&gt;4) bond in the backbone of a xyloglucan and transfers the xyloglucanyl segment on to O-4 of the non-reducing terminal glucose residue of an acceptor, which can be a xyloglucan or an oligosaccharide of xyloglucan.. Functionally, catalyzes xyloglucan endohydrolysis (XEH) and/or endotransglycosylation (XET). Cleaves and religates xyloglucan polymers, an essential constituent of the primary cell wall, and thereby participates in cell wall construction of growing tissues. May promote elongation of three internodes (II, III and IV) and may be involved in cell elongation processes. The protein is Xyloglucan endotransglycosylase/hydrolase protein 8 (XTH8) of Oryza sativa subsp. japonica (Rice).